Consider the following 393-residue polypeptide: tRNA(Met) cytidine acetate ligase (393 aa).

Positions 81, 142, and 167 each coordinate ATP.

This sequence belongs to the TmcAL family.

The protein resides in the cytoplasm. The enzyme catalyses cytidine(34) in elongator tRNA(Met) + acetate + ATP = N(4)-acetylcytidine(34) in elongator tRNA(Met) + AMP + diphosphate. Catalyzes the formation of N(4)-acetylcytidine (ac(4)C) at the wobble position of elongator tRNA(Met), using acetate and ATP as substrates. First activates an acetate ion to form acetyladenylate (Ac-AMP) and then transfers the acetyl group to tRNA to form ac(4)C34. In Bacillus thuringiensis subsp. konkukian (strain 97-27), this protein is tRNA(Met) cytidine acetate ligase.